We begin with the raw amino-acid sequence, 65 residues long: Hirudin-3B (65 aa).

Positions 1-3 (VVY) are interaction with thrombin active site. Intrachain disulfides connect C6–C14, C16–C28, and C22–C39. Positions 40–65 (VTGEGTPKPQSHNDGDFEEIPEEYLQ) are disordered. The O-linked (GalNAc...) threonine glycan is linked to T45. An interaction with fibrinogen-binding exosite of thrombin region spans residues 55–65 (DFEEIPEEYLQ). The span at 55–65 (DFEEIPEEYLQ) shows a compositional bias: acidic residues. At Y63 the chain carries Sulfotyrosine.

This sequence belongs to the protease inhibitor I14 (hirudin) family.

The protein localises to the secreted. Functionally, hirudin is a potent thrombin-specific protease inhibitor. It forms a stable non-covalent complex with alpha-thrombin, thereby abolishing its ability to cleave fibrinogen. The polypeptide is Hirudin-3B (Hirudo medicinalis (Medicinal leech)).